A 304-amino-acid chain; its full sequence is MALSPSVVPQESEENNANCVETKQSQTASTASEDPLQHLCLASQEVLHKAQQSGRSRCLQCGGSRMFYCYTCYVPVENVPTEQIPFVQLPLKIDIIKHPNETDGKSTAVHAKLLAPDSVNIYTYPCIPEYEGQDHEVVLVFPGPQSISIKDVSFHLQKRIESKGGDKADDLDMPPRKLVRTEAQEGWHLNESMGKGPELKRVVFIDSTWSQTNQITSDERLRELLQVELKTRKTCFWRHQKGKPDTFLSTIEAIYYFLVDYHRAVQKEEYRGQYDNLLFFYSFMYRLIKEARRSGEKAKQKPIH.

The tract at residues 1–30 (MALSPSVVPQESEENNANCVETKQSQTAST) is disordered. Residues 15–30 (NNANCVETKQSQTAST) show a composition bias toward polar residues. A DXTW motif is present at residues 206–209 (DSTW).

This sequence belongs to the TDD superfamily. DTWD1 family.

The protein resides in the nucleus. The catalysed reaction is a uridine in tRNA + S-adenosyl-L-methionine = a 3-[(3S)-3-amino-3-carboxypropyl]uridine in tRNA + S-methyl-5'-thioadenosine + H(+). Catalyzes the formation of 3-(3-amino-3-carboxypropyl)uridine (acp3U) at position 20 in the D-loop of several cytoplasmic tRNAs (acp3U(20)). This Rattus norvegicus (Rat) protein is tRNA-uridine aminocarboxypropyltransferase 1.